The primary structure comprises 297 residues: Tyrosine recombinase XerD (297 aa).

Positions 2 to 86 (KKLDPIIEQF…CLRKFFRFLC (85 aa)) constitute a Core-binding (CB) domain. Positions 107–291 (QLPKSLSEEQ…AKTRLKSIHK (185 aa)) constitute a Tyr recombinase domain. Catalysis depends on residues Arg147, Lys171, His243, Arg246, and His269. Tyr278 serves as the catalytic O-(3'-phospho-DNA)-tyrosine intermediate.

The protein belongs to the 'phage' integrase family. XerD subfamily. In terms of assembly, forms a cyclic heterotetrameric complex composed of two molecules of XerC and two molecules of XerD.

It is found in the cytoplasm. Functionally, site-specific tyrosine recombinase, which acts by catalyzing the cutting and rejoining of the recombining DNA molecules. The XerC-XerD complex is essential to convert dimers of the bacterial chromosome into monomers to permit their segregation at cell division. It also contributes to the segregational stability of plasmids. The chain is Tyrosine recombinase XerD from Haemophilus ducreyi (strain 35000HP / ATCC 700724).